Here is a 585-residue protein sequence, read N- to C-terminus: A-type ATP synthase subunit A (585 aa).

237 to 244 (GPFGSGKT) serves as a coordination point for ATP.

The protein belongs to the ATPase alpha/beta chains family. Has multiple subunits with at least A(3), B(3), C, D, E, F, H, I and proteolipid K(x).

Its subcellular location is the cell membrane. It catalyses the reaction ATP + H2O + 4 H(+)(in) = ADP + phosphate + 5 H(+)(out). Its function is as follows. Component of the A-type ATP synthase that produces ATP from ADP in the presence of a proton gradient across the membrane. The A chain is the catalytic subunit. This Natronomonas pharaonis (strain ATCC 35678 / DSM 2160 / CIP 103997 / JCM 8858 / NBRC 14720 / NCIMB 2260 / Gabara) (Halobacterium pharaonis) protein is A-type ATP synthase subunit A.